The chain runs to 260 residues: DNA-binding protein RFXANK (260 aa).

A disordered region spans residues 1 to 79 (MELTQPAEDL…STTLTNRQRG (79 aa)). Residues 22 to 33 (GDPEDPGEEAAD) show a composition bias toward acidic residues. The segment covering 57 to 77 (SVSSPQAGSSLKHSTTLTNRQ) has biased composition (polar residues). ANK repeat units follow at residues 89–118 (LDSLSIHQLAAQGELDQLKEHLRKGDNLVN), 123–152 (RGFTPLIWASAFGEIETVRFLLEWGADPHI), 156–185 (ERESALSLASTGGYTDIVGLLLERDVDINI), 189–218 (NGGTPLLYAVRGNHVKCVEALLARGADLTT), and 222–251 (SGYTPMDLAVALGYRKVQQVIENHILKLFQ).

As to quaternary structure, forms homodimers. The RFX heterotetrameric complex consists of 2 molecules of RFX5 and one each of RFXAP and RFX-B/RFXANK; with each subunit representing a separate complementation group. Interacts (via ankyrin repeats) with RFX5 (via PxLPxI/L motif); the interaction is direct. RFX forms cooperative DNA binding complexes with X2BP and CBF/NF-Y. RFX associates with CIITA to form an active transcriptional complex. Interacts with RAF1. Interacts (via ankyrin repeats) with RFX7 (via PxLPxI/L motif). In terms of processing, phosphorylated by RAF1. Ubiquitous.

It localises to the cytoplasm. The protein resides in the nucleus. Functionally, activates transcription from class II MHC promoters. Activation requires the activity of the MHC class II transactivator/CIITA. May regulate other genes in the cell. RFX binds the X1 box of MHC-II promoters. May also potentiate the activation of RAF1. In terms of biological role, isoform 2 is not involved in the positive regulation of MHC class II genes. The polypeptide is DNA-binding protein RFXANK (RFXANK) (Homo sapiens (Human)).